The sequence spans 452 residues: Bifunctional protein GlmU (452 aa).

A pyrophosphorylase region spans residues 1 to 232 (MTARNSLTIV…EDEVRGINTK (232 aa)). UDP-N-acetyl-alpha-D-glucosamine contacts are provided by residues 11-14 (LAAG), lysine 25, glutamine 78, and 83-84 (GT). Aspartate 108 lines the Mg(2+) pocket. UDP-N-acetyl-alpha-D-glucosamine is bound by residues glycine 144, glutamate 158, asparagine 173, and asparagine 230. Asparagine 230 contributes to the Mg(2+) binding site. Positions 233-253 (AQLAEAETVMQTRLRLAAMAA) are linker. Residues 254–452 (GVTLIAPETV…KSRHRKPKAH (199 aa)) form an N-acetyltransferase region. Residues arginine 319 and lysine 337 each coordinate UDP-N-acetyl-alpha-D-glucosamine. The active-site Proton acceptor is histidine 349. Tyrosine 352 and asparagine 363 together coordinate UDP-N-acetyl-alpha-D-glucosamine. Acetyl-CoA contacts are provided by residues alanine 366, 372–373 (NY), serine 391, serine 409, and arginine 426.

In the N-terminal section; belongs to the N-acetylglucosamine-1-phosphate uridyltransferase family. It in the C-terminal section; belongs to the transferase hexapeptide repeat family. In terms of assembly, homotrimer. The cofactor is Mg(2+).

The protein localises to the cytoplasm. The enzyme catalyses alpha-D-glucosamine 1-phosphate + acetyl-CoA = N-acetyl-alpha-D-glucosamine 1-phosphate + CoA + H(+). It catalyses the reaction N-acetyl-alpha-D-glucosamine 1-phosphate + UTP + H(+) = UDP-N-acetyl-alpha-D-glucosamine + diphosphate. The protein operates within nucleotide-sugar biosynthesis; UDP-N-acetyl-alpha-D-glucosamine biosynthesis; N-acetyl-alpha-D-glucosamine 1-phosphate from alpha-D-glucosamine 6-phosphate (route II): step 2/2. It participates in nucleotide-sugar biosynthesis; UDP-N-acetyl-alpha-D-glucosamine biosynthesis; UDP-N-acetyl-alpha-D-glucosamine from N-acetyl-alpha-D-glucosamine 1-phosphate: step 1/1. It functions in the pathway bacterial outer membrane biogenesis; LPS lipid A biosynthesis. In terms of biological role, catalyzes the last two sequential reactions in the de novo biosynthetic pathway for UDP-N-acetylglucosamine (UDP-GlcNAc). The C-terminal domain catalyzes the transfer of acetyl group from acetyl coenzyme A to glucosamine-1-phosphate (GlcN-1-P) to produce N-acetylglucosamine-1-phosphate (GlcNAc-1-P), which is converted into UDP-GlcNAc by the transfer of uridine 5-monophosphate (from uridine 5-triphosphate), a reaction catalyzed by the N-terminal domain. The polypeptide is Bifunctional protein GlmU (Rhodopseudomonas palustris (strain ATCC BAA-98 / CGA009)).